The primary structure comprises 228 residues: 2,3-bisphosphoglycerate-dependent phosphoglycerate mutase (228 aa).

Substrate contacts are provided by residues 8–15 (RHGQSQWN), 21–22 (TG), Arg-60, 87–90 (ERHY), Lys-98, 114–115 (RR), and 180–181 (GN). His-9 acts as the Tele-phosphohistidine intermediate in catalysis. Catalysis depends on Glu-87, which acts as the Proton donor/acceptor.

Belongs to the phosphoglycerate mutase family. BPG-dependent PGAM subfamily. As to quaternary structure, homodimer.

The enzyme catalyses (2R)-2-phosphoglycerate = (2R)-3-phosphoglycerate. The protein operates within carbohydrate degradation; glycolysis; pyruvate from D-glyceraldehyde 3-phosphate: step 3/5. Catalyzes the interconversion of 2-phosphoglycerate and 3-phosphoglycerate. The chain is 2,3-bisphosphoglycerate-dependent phosphoglycerate mutase from Erythrobacter litoralis (strain HTCC2594).